A 724-amino-acid polypeptide reads, in one-letter code: Acyl-coenzyme A oxidase 2 (724 aa).

Residues 1-48 (MAMLSQPNDGHDHPEKKDPDTTPKQVAGVISSQDPPHPAKDVAEERAR) are disordered. Basic and acidic residues-rich tracts occupy residues 9-21 (DGHD…DPDT) and 37-48 (HPAKDVAEERAR).

Belongs to the acyl-CoA oxidase family. FAD serves as cofactor.

It localises to the peroxisome. The enzyme catalyses a 2,3-saturated acyl-CoA + O2 = a (2E)-enoyl-CoA + H2O2. The protein operates within lipid metabolism; peroxisomal fatty acid beta-oxidation. In Candida tropicalis (Yeast), this protein is Acyl-coenzyme A oxidase 2 (POX2).